A 153-amino-acid chain; its full sequence is Ribosomal RNA large subunit methyltransferase H (153 aa).

S-adenosyl-L-methionine contacts are provided by residues Leu-70, Gly-102, and 121–126 (LSRMTF).

The protein belongs to the RNA methyltransferase RlmH family. Homodimer.

The protein resides in the cytoplasm. It catalyses the reaction pseudouridine(1915) in 23S rRNA + S-adenosyl-L-methionine = N(3)-methylpseudouridine(1915) in 23S rRNA + S-adenosyl-L-homocysteine + H(+). In terms of biological role, specifically methylates the pseudouridine at position 1915 (m3Psi1915) in 23S rRNA. The polypeptide is Ribosomal RNA large subunit methyltransferase H (Geotalea uraniireducens (strain Rf4) (Geobacter uraniireducens)).